Consider the following 524-residue polypeptide: Bifunctional purine biosynthesis protein PurH (524 aa).

In terms of domain architecture, MGS-like spans 1-145 (MIKQALLSVS…KNHRDVTVIV (145 aa)).

The protein belongs to the PurH family.

The catalysed reaction is (6R)-10-formyltetrahydrofolate + 5-amino-1-(5-phospho-beta-D-ribosyl)imidazole-4-carboxamide = 5-formamido-1-(5-phospho-D-ribosyl)imidazole-4-carboxamide + (6S)-5,6,7,8-tetrahydrofolate. It catalyses the reaction IMP + H2O = 5-formamido-1-(5-phospho-D-ribosyl)imidazole-4-carboxamide. The protein operates within purine metabolism; IMP biosynthesis via de novo pathway; 5-formamido-1-(5-phospho-D-ribosyl)imidazole-4-carboxamide from 5-amino-1-(5-phospho-D-ribosyl)imidazole-4-carboxamide (10-formyl THF route): step 1/1. Its pathway is purine metabolism; IMP biosynthesis via de novo pathway; IMP from 5-formamido-1-(5-phospho-D-ribosyl)imidazole-4-carboxamide: step 1/1. The sequence is that of Bifunctional purine biosynthesis protein PurH from Cupriavidus taiwanensis (strain DSM 17343 / BCRC 17206 / CCUG 44338 / CIP 107171 / LMG 19424 / R1) (Ralstonia taiwanensis (strain LMG 19424)).